The chain runs to 336 residues: Syntaxin-31 (336 aa).

Topologically, residues 1 to 314 (MGSTFRDRTV…QHLTRISSNR (314 aa)) are cytoplasmic. Disordered regions lie at residues 23 to 53 (GAIP…KASR) and 152 to 218 (RSEN…SQLR). Positions 154–163 (ENMKAHENRK) are enriched in basic and acidic residues. Residues 164–181 (QLFSTKNAVDSPPQNNAK) are compositionally biased toward polar residues. Residues 190–202 (SSSSNPFGNLQQP) show a composition bias toward low complexity. Positions 244-306 (ENYSQSRAVA…EGARSALLQH (63 aa)) constitute a t-SNARE coiled-coil homology domain. The chain crosses the membrane as a helical; Anchor for type IV membrane protein span at residues 315–335 (WLMMKIFAVIILFLIVFLFFV). Residue alanine 336 is a topological domain, vesicular.

The protein belongs to the syntaxin family. Part of the t-SNARE complex. Interacts with CDC48A, but not with VPS45.

The protein localises to the golgi apparatus. The protein resides in the cis-Golgi network membrane. It localises to the cytoplasm. Its subcellular location is the endosome. Its function is as follows. Vesicle trafficking protein that functions in the secretory pathway. The chain is Syntaxin-31 (SYP31) from Arabidopsis thaliana (Mouse-ear cress).